A 618-amino-acid polypeptide reads, in one-letter code: Carotenoid cleavage dioxygenase 7, chloroplastic (618 aa).

A chloroplast-targeting transit peptide spans 1-31 (MSLPIPPKFLPPLKSPPIHHHQTPPPLAPPR). The interval 11–34 (PPLKSPPIHHHQTPPPLAPPRAAI) is disordered. H266, H319, H398, and H612 together coordinate Fe cation.

It belongs to the carotenoid oxygenase family. Requires Fe(2+) as cofactor. Expressed in flowers, siliques, inflorescence stems, petiole, leaves and roots.

The protein resides in the plastid. The protein localises to the chloroplast. It carries out the reaction 9-cis-beta-carotene + O2 = 9-cis-10'-apo-beta-carotenal + beta-ionone. Involved in strigolactones biosynthesis by cleaving asymmetrically a variety of linear and cyclic carotenoids at the 9-10 double bond. Produces one C(13) beta-ionone and the C(27) 10'-apo-beta-carotenal. Strigolactones are hormones that inhibit tillering and shoot branching through the MAX-dependent pathway, contribute to the regulation of shoot architectural response to phosphate-limiting conditions and function as rhizosphere signal that stimulates hyphal branching of arbuscular mycorrhizal fungi and trigger seed germination of root parasitic weeds. No activity on lycopene, lutein, zeaxanthin, violaxanthin or neoxanthin. Probably not involved in abscisic acid biosynthesis. This is Carotenoid cleavage dioxygenase 7, chloroplastic (CCD7) from Arabidopsis thaliana (Mouse-ear cress).